The sequence spans 72 residues: Translation initiation factor IF-1 (72 aa).

Residues 1–72 enclose the S1-like domain; the sequence is MSKEEVLEFS…TKGRITYRYK (72 aa).

This sequence belongs to the IF-1 family. Component of the 30S ribosomal translation pre-initiation complex which assembles on the 30S ribosome in the order IF-2 and IF-3, IF-1 and N-formylmethionyl-tRNA(fMet); mRNA recruitment can occur at any time during PIC assembly.

The protein resides in the cytoplasm. In terms of biological role, one of the essential components for the initiation of protein synthesis. Stabilizes the binding of IF-2 and IF-3 on the 30S subunit to which N-formylmethionyl-tRNA(fMet) subsequently binds. Helps modulate mRNA selection, yielding the 30S pre-initiation complex (PIC). Upon addition of the 50S ribosomal subunit IF-1, IF-2 and IF-3 are released leaving the mature 70S translation initiation complex. This Bartonella quintana (strain Toulouse) (Rochalimaea quintana) protein is Translation initiation factor IF-1.